We begin with the raw amino-acid sequence, 119 residues long: Ribonuclease P protein component (119 aa).

Belongs to the RnpA family. Consists of a catalytic RNA component (M1 or rnpB) and a protein subunit.

It carries out the reaction Endonucleolytic cleavage of RNA, removing 5'-extranucleotides from tRNA precursor.. Its function is as follows. RNaseP catalyzes the removal of the 5'-leader sequence from pre-tRNA to produce the mature 5'-terminus. It can also cleave other RNA substrates such as 4.5S RNA. The protein component plays an auxiliary but essential role in vivo by binding to the 5'-leader sequence and broadening the substrate specificity of the ribozyme. The polypeptide is Ribonuclease P protein component (Salmonella arizonae (strain ATCC BAA-731 / CDC346-86 / RSK2980)).